Here is a 446-residue protein sequence, read N- to C-terminus: Histidine--tRNA ligase (446 aa).

The protein belongs to the class-II aminoacyl-tRNA synthetase family. In terms of assembly, homodimer.

The protein resides in the cytoplasm. The catalysed reaction is tRNA(His) + L-histidine + ATP = L-histidyl-tRNA(His) + AMP + diphosphate + H(+). The sequence is that of Histidine--tRNA ligase from Paraburkholderia xenovorans (strain LB400).